The primary structure comprises 485 residues: Probable carboxypeptidase S-like 1 (485 aa).

Positions Met-1–Ser-21 are cleaved as a signal peptide. His-111 serves as a coordination point for Zn(2+). The active site involves Asp-113. Residue Asp-142 participates in Zn(2+) binding. The Proton acceptor role is filled by Glu-177. The Zn(2+) site is built by Glu-178, Asp-204, and His-431.

Belongs to the peptidase M20A family. The cofactor is Zn(2+).

It localises to the secreted. The sequence is that of Probable carboxypeptidase S-like 1 from Dictyostelium discoideum (Social amoeba).